A 363-amino-acid polypeptide reads, in one-letter code: Flagellar P-ring protein (363 aa).

A signal peptide spans 1-20 (MKLKLILAVAMLAFSLPSQA).

This sequence belongs to the FlgI family. The basal body constitutes a major portion of the flagellar organelle and consists of four rings (L,P,S, and M) mounted on a central rod.

It is found in the periplasm. The protein localises to the bacterial flagellum basal body. Assembles around the rod to form the L-ring and probably protects the motor/basal body from shearing forces during rotation. This chain is Flagellar P-ring protein, found in Shewanella sp. (strain MR-4).